Reading from the N-terminus, the 72-residue chain is Translation initiation factor IF-1 (72 aa).

One can recognise an S1-like domain in the interval 2–72; that stretch reads AKEDCIEMQG…NKGRIIFRSR (71 aa).

Belongs to the IF-1 family. Component of the 30S ribosomal translation pre-initiation complex which assembles on the 30S ribosome in the order IF-2 and IF-3, IF-1 and N-formylmethionyl-tRNA(fMet); mRNA recruitment can occur at any time during PIC assembly.

It is found in the cytoplasm. One of the essential components for the initiation of protein synthesis. Stabilizes the binding of IF-2 and IF-3 on the 30S subunit to which N-formylmethionyl-tRNA(fMet) subsequently binds. Helps modulate mRNA selection, yielding the 30S pre-initiation complex (PIC). Upon addition of the 50S ribosomal subunit IF-1, IF-2 and IF-3 are released leaving the mature 70S translation initiation complex. The chain is Translation initiation factor IF-1 from Pasteurella multocida (strain Pm70).